A 542-amino-acid polypeptide reads, in one-letter code: Membrane protein insertase YidC (542 aa).

The next 5 helical transmembrane spans lie at Leu-7–Phe-27, Phe-338–Val-358, Met-417–Phe-437, Leu-455–Leu-475, and Phe-494–Trp-514.

This sequence belongs to the OXA1/ALB3/YidC family. Type 1 subfamily. In terms of assembly, interacts with the Sec translocase complex via SecD. Specifically interacts with transmembrane segments of nascent integral membrane proteins during membrane integration.

The protein localises to the cell inner membrane. Required for the insertion and/or proper folding and/or complex formation of integral membrane proteins into the membrane. Involved in integration of membrane proteins that insert both dependently and independently of the Sec translocase complex, as well as at least some lipoproteins. Aids folding of multispanning membrane proteins. The polypeptide is Membrane protein insertase YidC (Actinobacillus pleuropneumoniae serotype 7 (strain AP76)).